The following is a 581-amino-acid chain: Membrane protein insertase YidC (581 aa).

Residues 7–27 (ILIVALAVVSYLMVLQWNEDY) form a helical membrane-spanning segment. Positions 41–62 (AATPALPDTPADTASTGGDDIP) are disordered. A run of 5 helical transmembrane segments spans residues 365–385 (TVDY…LEVI), 388–408 (LLGN…LIFF), 458–478 (LGGC…YWVL), 489–509 (WMFW…PIIM), and 536–556 (PIIF…YWVV).

Belongs to the OXA1/ALB3/YidC family. Type 1 subfamily. In terms of assembly, interacts with the Sec translocase complex via SecD. Specifically interacts with transmembrane segments of nascent integral membrane proteins during membrane integration.

The protein resides in the cell inner membrane. In terms of biological role, required for the insertion and/or proper folding and/or complex formation of integral membrane proteins into the membrane. Involved in integration of membrane proteins that insert both dependently and independently of the Sec translocase complex, as well as at least some lipoproteins. Aids folding of multispanning membrane proteins. This is Membrane protein insertase YidC from Ectopseudomonas mendocina (strain ymp) (Pseudomonas mendocina).